We begin with the raw amino-acid sequence, 125 residues long: Subtelomeric hrmA-associated cluster protein cgnA (125 aa).

G-Q-I/R/S repeat units lie at residues 11–13 (GQI), 14–16 (GPI), 17–19 (GQR), 20–22 (GQS), 23–25 (GQR), 26–28 (GQS), 29–31 (GQR), 32–34 (GQS), 35–37 (GQI), 38–40 (GQS), 41–43 (GQS), 44–46 (GQS), 47–49 (GQS), 50–52 (GQS), 53–55 (GQI), 56–58 (GQI), 59–61 (GQI), 62–64 (GQI), 65–67 (GQI), 68–70 (GQI), 71–73 (GQI), 74–76 (GQI), and 77–79 (GQA). A 23 X 3 AA approximate tandem repeats of G-Q-I/R/S region spans residues 11 to 79 (GQIGPIGQRG…IGQIGQIGQA (69 aa)). Residues 15–57 (PIGQRGQSGQRGQSGQRGQSGQIGQSGQSGQSGQSGQSGQIGQ) are disordered.

Its subcellular location is the secreted. Functionally, hypoxia responsive morphology factor that modulates the expression of the subtelomeric hrmA-associated cluster (HAC) containing genes that alter the hyphal surface (such as reduced total chitin or increased beta-glucan exposure) and perturb inter-hyphal interactions within the developing biofilms, resulting in a loss of vertically aligned polarized growing filaments. Consequently, this hypoxia-typic morphotype (called H-MORPH) with altered biofilm architecture leads to increased hypoxia fitness, increased host inflammation, rapid disease progression, and mortality in a murine model of invasive aspergillosis. GcnA is directly involved in the reduction total surface chitin and the increase beta-glucan exposure, and mediates the detachment of the extracellular matrix and especially of its component galactosaminogalactan (GAG). The protein is Subtelomeric hrmA-associated cluster protein cgnA of Aspergillus fumigatus (strain CBS 144.89 / FGSC A1163 / CEA10) (Neosartorya fumigata).